A 923-amino-acid chain; its full sequence is DNA mismatch repair protein PMS1 (923 aa).

Basic and acidic residues-rich tracts occupy residues 543–553 (DMTPSERDSEL), 565–581 (NVERHEREHEKPIRFEE), and 591–601 (GDVERVSEDNP). Positions 543–603 (DMTPSERDSE…ERVSEDNPRC (61 aa)) are disordered.

The protein belongs to the DNA mismatch repair MutL/HexB family. Heterodimer of MLH1 and PMS1, called MutLalpha, which is the major MMR MutL activity correcting base-base mismatches as well as IDLs. The heterodimer binds double strand DNA independently of a mismatch with positive cooperativity and has more than one DNA binding site. Forms a ternary complex with either the MSH2-MSH6 (MutSalpha) or the MSH2-MSH3 heterodimer (MutSbeta), which recognize and bind to mismatch DNA. Ternary complex formation is promoted by ATP binding. In terms of tissue distribution, expressed at very low levels in mature leaves. Detected in rapidly dividing tissues.

The protein localises to the nucleus. Functionally, required for DNA mismatch repair (MMR), correcting base-base mismatches and insertion-deletion loops (IDLs) resulting from DNA replication, DNA damage or from recombination events between non-identical sequences during meiosis. Component of the MutLalpha heterodimer that forms a ternary complex with the MutS heterodimers, which initially recognize the DNA mismatches. This complex is thought to be responsible for directing the downstream MMR events, including strand discrimination, excision, and resynthesis. Plays a major role in maintaining the genetic stability of simple sequence repeats and in the repair of heteroduplex sites present in meiotic recombination intermediates. Does not seem to be required for homologous somatic recombination. The protein is DNA mismatch repair protein PMS1 (PMS1) of Arabidopsis thaliana (Mouse-ear cress).